A 760-amino-acid polypeptide reads, in one-letter code: Xaa-Pro dipeptidyl-peptidase (760 aa).

Active-site charge relay system residues include serine 349, aspartate 469, and histidine 499.

Belongs to the peptidase S15 family. Homodimer.

The protein resides in the cytoplasm. It carries out the reaction Hydrolyzes Xaa-Pro-|- bonds to release unblocked, N-terminal dipeptides from substrates including Ala-Pro-|-p-nitroanilide and (sequentially) Tyr-Pro-|-Phe-Pro-|-Gly-Pro-|-Ile.. In terms of biological role, removes N-terminal dipeptides sequentially from polypeptides having unsubstituted N-termini provided that the penultimate residue is proline. The chain is Xaa-Pro dipeptidyl-peptidase from Streptococcus pyogenes serotype M18 (strain MGAS8232).